We begin with the raw amino-acid sequence, 423 residues long: UDP-N-acetylglucosamine 1-carboxyvinyltransferase 1 (423 aa).

23 to 24 (KN) is a phosphoenolpyruvate binding site. Arg-96 lines the UDP-N-acetyl-alpha-D-glucosamine pocket. Catalysis depends on Cys-120, which acts as the Proton donor. Residue Cys-120 is modified to 2-(S-cysteinyl)pyruvic acid O-phosphothioketal. Residues 125–129 (RPIDL), Asp-309, and Val-331 each bind UDP-N-acetyl-alpha-D-glucosamine.

The protein belongs to the EPSP synthase family. MurA subfamily.

It localises to the cytoplasm. The catalysed reaction is phosphoenolpyruvate + UDP-N-acetyl-alpha-D-glucosamine = UDP-N-acetyl-3-O-(1-carboxyvinyl)-alpha-D-glucosamine + phosphate. It participates in cell wall biogenesis; peptidoglycan biosynthesis. Functionally, cell wall formation. Adds enolpyruvyl to UDP-N-acetylglucosamine. The protein is UDP-N-acetylglucosamine 1-carboxyvinyltransferase 1 of Streptococcus mutans serotype c (strain ATCC 700610 / UA159).